The primary structure comprises 715 residues: Elongation factor G (715 aa).

Residues 12–309 form the tr-type G domain; the sequence is RRVRNIGIMA…GVIDYLPSPL (298 aa). Residues 21–28, 108–112, and 162–165 each bind GTP; these read AHIDAGKT, DTPGH, and NKMD.

It belongs to the TRAFAC class translation factor GTPase superfamily. Classic translation factor GTPase family. EF-G/EF-2 subfamily.

It is found in the cytoplasm. Functionally, catalyzes the GTP-dependent ribosomal translocation step during translation elongation. During this step, the ribosome changes from the pre-translocational (PRE) to the post-translocational (POST) state as the newly formed A-site-bound peptidyl-tRNA and P-site-bound deacylated tRNA move to the P and E sites, respectively. Catalyzes the coordinated movement of the two tRNA molecules, the mRNA and conformational changes in the ribosome. The chain is Elongation factor G from Rubrobacter xylanophilus (strain DSM 9941 / JCM 11954 / NBRC 16129 / PRD-1).